Here is a 448-residue protein sequence, read N- to C-terminus: MLHRYLPMTEEDKQEMLKTIGVASIDDLFADIPEQVRFRGELKVKPAKSEPELWKELAALAEKNASVKQYVSFLGAGVYDHYIPAVVDHVLSRSEFYTAYTPYQPEISQGELQAIFEFQTMVCELTGMDVANSSMYDGGTALAEAVLLSAAHTKRKKVLISTAVHPQYREVVRTYAKGQKLEVKEIPYDGGITDLKALEAEMGDDVACVVVQYPNFFGQIEPLKAIAPLAHEKKSLFVVASNPLALGVLTPPGAFGADIVVGDMQPFGIPTQFGGPHCGYFAVKAPLMRKIPGRLVGQTTDEDGRRGFVLTLQAREQHIRRDKATSNICSNQALNALAASVALSALGKRGVKEMAAMNIQKAHYAKVELEKRGLSSPFAGPFFNEFVIRLGRPVSDVNDRLLEKGIIGGYDLGADYPELAGHMLVAVTELRTKEEIDRFVNELGDGHA.

Belongs to the GcvP family. N-terminal subunit subfamily. In terms of assembly, the glycine cleavage system is composed of four proteins: P, T, L and H. In this organism, the P 'protein' is a heterodimer of two subunits.

It catalyses the reaction N(6)-[(R)-lipoyl]-L-lysyl-[glycine-cleavage complex H protein] + glycine + H(+) = N(6)-[(R)-S(8)-aminomethyldihydrolipoyl]-L-lysyl-[glycine-cleavage complex H protein] + CO2. The glycine cleavage system catalyzes the degradation of glycine. The P protein binds the alpha-amino group of glycine through its pyridoxal phosphate cofactor; CO(2) is released and the remaining methylamine moiety is then transferred to the lipoamide cofactor of the H protein. The polypeptide is Probable glycine dehydrogenase (decarboxylating) subunit 1 (Geobacillus kaustophilus (strain HTA426)).